The chain runs to 353 residues: Deoxyhypusine synthase (353 aa).

NAD(+) is bound by residues Ser90–Ser94, Thr116–Gly118, Glu122, and Asp228. Glu121 to Glu122 lines the spermidine pocket. Asp233 lines the spermidine pocket. Gly275 is an NAD(+) binding site. A spermidine-binding site is contributed by His280. Position 300–301 (Thr300–Ala301) interacts with NAD(+). Residues Gly306 to Asp308 and Glu315 to Lys321 contribute to the spermidine site. Catalysis depends on Lys321, which acts as the Nucleophile. Glu334–Ala335 contacts NAD(+).

Belongs to the deoxyhypusine synthase family. In terms of assembly, homotetramer. The cofactor is NAD(+).

It carries out the reaction [eIF5A protein]-L-lysine + spermidine = [eIF5A protein]-deoxyhypusine + propane-1,3-diamine. Its pathway is protein modification; eIF5A hypusination. Catalyzes the NAD-dependent oxidative cleavage of spermidine and the subsequent transfer of the butylamine moiety of spermidine to the epsilon-amino group of a specific lysine residue of the eIF-5A precursor protein to form the intermediate deoxyhypusine residue. In Neurospora crassa (strain ATCC 24698 / 74-OR23-1A / CBS 708.71 / DSM 1257 / FGSC 987), this protein is Deoxyhypusine synthase (dys-1).